The primary structure comprises 291 residues: Elongation factor Ts (291 aa).

The segment at 79–82 (TDFV) is involved in Mg(2+) ion dislocation from EF-Tu.

The protein belongs to the EF-Ts family.

Its subcellular location is the cytoplasm. Its function is as follows. Associates with the EF-Tu.GDP complex and induces the exchange of GDP to GTP. It remains bound to the aminoacyl-tRNA.EF-Tu.GTP complex up to the GTP hydrolysis stage on the ribosome. The chain is Elongation factor Ts from Ruegeria sp. (strain TM1040) (Silicibacter sp.).